A 407-amino-acid chain; its full sequence is Formamidase (407 aa).

In terms of assembly, homotrimer.

It catalyses the reaction formamide + H2O = formate + NH4(+). In terms of biological role, hydrolyzes formamide with the production of ammonia which can be used as a source of nitrogen for growth. Also acts, more slowly, on acetamide, propanamide and butanamide. This is Formamidase (fmdA) from Methylophilus methylotrophus (Bacterium W3A1).